The chain runs to 365 residues: Chorismate synthase (365 aa).

An NADP(+)-binding site is contributed by Arg-47. Residues 124 to 126 (RAS), Gly-287, 302 to 306 (KPTAT), and Arg-328 each bind FMN.

The protein belongs to the chorismate synthase family. Homotetramer. Requires FMNH2 as cofactor.

It catalyses the reaction 5-O-(1-carboxyvinyl)-3-phosphoshikimate = chorismate + phosphate. It functions in the pathway metabolic intermediate biosynthesis; chorismate biosynthesis; chorismate from D-erythrose 4-phosphate and phosphoenolpyruvate: step 7/7. Its function is as follows. Catalyzes the anti-1,4-elimination of the C-3 phosphate and the C-6 proR hydrogen from 5-enolpyruvylshikimate-3-phosphate (EPSP) to yield chorismate, which is the branch point compound that serves as the starting substrate for the three terminal pathways of aromatic amino acid biosynthesis. This reaction introduces a second double bond into the aromatic ring system. This chain is Chorismate synthase, found in Prochlorococcus marinus (strain AS9601).